The following is a 696-amino-acid chain: HIPL2 protein (696 aa).

Residues 1-24 (MAKTNQAITICSLLLLLLLSETTS) form the signal peptide. Asn-38, Asn-69, Asn-74, Asn-108, Asn-124, Asn-148, Asn-175, Asn-339, Asn-431, Asn-513, Asn-519, Asn-528, Asn-581, and Asn-651 each carry an N-linked (GlcNAc...) asparagine glycan. Ser-672 is lipidated: GPI-anchor amidated serine. Positions 673 to 696 (SARKLCFSVFLLLSLLMMFLTLLD) are cleaved as a propeptide — removed in mature form.

The protein belongs to the PQQ oxidoreductase GdhB family. It depends on pyrroloquinoline quinone as a cofactor.

Its subcellular location is the cell membrane. The protein is HIPL2 protein (HIPL2) of Arabidopsis thaliana (Mouse-ear cress).